Reading from the N-terminus, the 177-residue chain is Small ribosomal subunit protein mS23 (177 aa).

Residue alanine 2 is modified to N-acetylalanine. An N6-succinyllysine modification is found at lysine 83. Lysine 102 bears the N6-acetyllysine mark. A disordered region spans residues 145-177; that stretch reads LQASSEGHEPQEDDDLAQRGQVKQEPETAPSPP.

This sequence belongs to the mitochondrion-specific ribosomal protein mS23 family. Component of the mitochondrial ribosome small subunit (28S) which comprises a 12S rRNA and about 30 distinct proteins.

The protein localises to the mitochondrion. The protein is Small ribosomal subunit protein mS23 of Mus musculus (Mouse).